Reading from the N-terminus, the 824-residue chain is Spindle-defective protein 2 (824 aa).

2 stretches are compositionally biased toward acidic residues: residues 16–27 and 35–44; these read EIEDSPIDDNDN and GDVELEEEEV. Residues 16–98 form a disordered region; it reads EIEDSPIDDN…SRPASVMSDK (83 aa). Polar residues predominate over residues 59-70; sequence TNMTNPKVNDLT. Residues 81 to 98 are compositionally biased toward low complexity; sequence SAASSRSASRPASVMSDK. A coiled-coil region spans residues 111-131; that stretch reads ENAIEEYTNQVFADENKADLL. Positions 189 to 252 are disordered; the sequence is RAKPGANDNE…GQYQGPNFDL (64 aa). Polar residues predominate over residues 207–225; it reads NVPTTSDKSAFITSPMNST. Positions 304-324 form a coiled coil; it reads NNKNQDLFAALEEARKRRAAQ. 2 disordered regions span residues 342 to 372 and 433 to 455; these read KPTSARHSGNVVSSTSNDNTTAASSKDLTTS and NNGNVSLSHGRDGRDSVSSVRTM. The segment covering 349-366 has biased composition (low complexity); that stretch reads SGNVVSSTSNDNTTAASS.

In terms of assembly, interacts with sas-7 (via C-terminus); may be recruited to centrioles by sas-7.

The protein localises to the cytoplasm. It localises to the cytoskeleton. The protein resides in the microtubule organizing center. It is found in the centrosome. Its subcellular location is the centriole. Its function is as follows. Required both for centrosome duplication and maturation. Required for pericentriolar material (PCM) recruitment. The sequence is that of Spindle-defective protein 2 from Caenorhabditis elegans.